Consider the following 182-residue polypeptide: UPF0254 protein MK0012 (182 aa).

Belongs to the UPF0254 family.

The protein is UPF0254 protein MK0012 of Methanopyrus kandleri (strain AV19 / DSM 6324 / JCM 9639 / NBRC 100938).